The following is a 787-amino-acid chain: Glutamine-dependent NAD(+) synthetase (787 aa).

The CN hydrolase domain maps to 5–275 (VTVAVSTLNQ…VEVTLATIDL (271 aa)). Catalysis depends on Glu-45, which acts as the Proton acceptor; for glutaminase activity. Lys-114 acts as the For glutaminase activity in catalysis. Residue Cys-175 is the Nucleophile; for glutaminase activity of the active site. The segment at 325 to 787 (MHTPEEEIAL…KIKDRTGIPV (463 aa)) is ligase. 355 to 362 (PLSGGVDS) is a binding site for ATP. Residue Ser-357 is part of the active site. Ser-703 carries the phosphoserine modification.

In the C-terminal section; belongs to the NAD synthetase family.

It carries out the reaction deamido-NAD(+) + L-glutamine + ATP + H2O = L-glutamate + AMP + diphosphate + NAD(+) + H(+). It participates in cofactor biosynthesis; NAD(+) biosynthesis; NAD(+) from deamido-NAD(+) (L-Gln route): step 1/1. Catalyzes the ATP-dependent amidation of deamido-NAD to form NAD. Uses L-glutamine as a nitrogen source. Because of its role in energy metabolism, involved in the modulation of aged-related cardiac function, mobility, and lifespan. The sequence is that of Glutamine-dependent NAD(+) synthetase from Drosophila melanogaster (Fruit fly).